We begin with the raw amino-acid sequence, 530 residues long: uncharacterized protein (530 aa).

Basic and acidic residues-rich tracts occupy residues 1-11 (MTALNDTERAV) and 28-38 (PRSEETASERP). The interval 1–38 (MTALNDTERAVRNWTAGRPHRPAPMRPPRSEETASERP) is disordered. Over 1–50 (MTALNDTERAVRNWTAGRPHRPAPMRPPRSEETASERPSRYYPTWLPSRS) the chain is Cytoplasmic. The chain crosses the membrane as a helical span at residues 51-71 (FIAAVIAIGGMQLLATMDSTV). At 72–91 (AIVALPKIQNELSLSDAGRS) the chain is on the extracellular side. The helical transmembrane segment at 92-112 (WVITAYVLTFGGLMLLGGRLG) threads the bilayer. Topologically, residues 113 to 119 (DTIGRKR) are cytoplasmic. Residues 120–140 (TFIVGVALFTISSVLCAVAWD) traverse the membrane as a helical segment. Over 141 to 150 (EATLVIARLS) the chain is Extracellular. A helical membrane pass occupies residues 151–171 (QGVGSAIASPTGLALVATTFP). Topologically, residues 172 to 180 (KGPARNAAT) are cytoplasmic. A helical membrane pass occupies residues 181 to 201 (AVFAAMTAIGSVMGLVVGGAL). Over 202–203 (TE) the chain is Extracellular. The chain crosses the membrane as a helical span at residues 204–224 (VSWRWAFLVNVPIGLVMIYLA). The Cytoplasmic segment spans residues 225–239 (RTALRETNKERMKLD). Residues 240-260 (ATGAILATLACTAAVFAFSIG) traverse the membrane as a helical segment. The Extracellular portion of the chain corresponds to 261–266 (PEKGWM). A helical transmembrane segment spans residues 267 to 287 (SGITIGSGLVALAAAVAFVIV). Residues 288-306 (ERTAENPVVPFHLFRDRNR) lie on the Cytoplasmic side of the membrane. Residues 307–327 (LVTFSAILLAGGVMFSLTVCI) form a helical membrane-spanning segment. Residues 328 to 343 (GLYVQDILGYSALRAG) are Extracellular-facing. Residues 344 to 364 (VGFIPFVIAMGIGLGVSSQLV) form a helical membrane-spanning segment. Residues 365-370 (SRFSPR) are Cytoplasmic-facing. Residues 371-391 (VLTIGGGYLLFGAMLYGSFFM) traverse the membrane as a helical segment. The Extracellular portion of the chain corresponds to 392 to 400 (HRGVPYFPN). Residues 401–421 (LVMPIVVGGIGIGMAVVPLTL) form a helical membrane-spanning segment. Residues 422 to 437 (SAIAGVGFDQIGPVSA) lie on the Cytoplasmic side of the membrane. A helical transmembrane segment spans residues 438–458 (IALMLQSLGGPLVLAVIQAVI). At 459–488 (TSRTLYLGGTTGPVKFMNDVQLAALDHAYT) the chain is on the extracellular side. Residues 489–509 (YGLLWVAGAAIIVGGMALFIG) form a helical membrane-spanning segment. At 510-530 (YTPQQVAHAQEVKEAIDAGEL) the chain is on the cytoplasmic side.

Belongs to the major facilitator superfamily.

The protein localises to the cell membrane. This is an uncharacterized protein from Mycobacterium tuberculosis (strain CDC 1551 / Oshkosh).